The sequence spans 222 residues: Sororin-like protein (222 aa).

A disordered region spans residues 1–189; sequence MEAPRSVGGR…VKQEKEDPVS (189 aa). Low complexity predominate over residues 24–33; that stretch reads SRSSQQSSSS. Over residues 47-60 the composition is skewed to basic and acidic residues; that stretch reads RLVEQTTLKEKPKD. Residues 88 to 105 show a composition bias toward low complexity; sequence ADLASPASAPSRPQTSRS. Residues 155–162 carry the Nuclear localization signal motif; it reads GKKTRQAS. Basic residues predominate over residues 167–179; it reads KTLKVAPKKRQRT. The tract at residues 192–214 is C-terminal Sororin domain; the sequence is CQDYIEKQKAYFAEIDAFELPVE.

This sequence belongs to the sororin family.

It is found in the nucleus. Its function is as follows. Regulator of sister chromatid cohesion in mitosis stabilizing cohesin complex association with chromatin. Antagonizes the action of WAPL proteins (WAPL1 and WAPL2) which stimulates cohesin dissociation from chromatin, particularly during somatic division in root cells and meiocytes during anaphase I. Required for centromeric sister chromatid cohesion during male meiosis (microsporogenesis). Cohesion ensures that chromosome partitioning is accurate in dividing cells and may play an important role in DNA repair. This Arabidopsis thaliana (Mouse-ear cress) protein is Sororin-like protein.